The chain runs to 156 residues: Ribosomal RNA large subunit methyltransferase H (156 aa).

S-adenosyl-L-methionine-binding positions include L73, G104, and 123–128 (LSALTM).

This sequence belongs to the RNA methyltransferase RlmH family. Homodimer.

The protein resides in the cytoplasm. The catalysed reaction is pseudouridine(1915) in 23S rRNA + S-adenosyl-L-methionine = N(3)-methylpseudouridine(1915) in 23S rRNA + S-adenosyl-L-homocysteine + H(+). Its function is as follows. Specifically methylates the pseudouridine at position 1915 (m3Psi1915) in 23S rRNA. In Tolumonas auensis (strain DSM 9187 / NBRC 110442 / TA 4), this protein is Ribosomal RNA large subunit methyltransferase H.